Here is a 176-residue protein sequence, read N- to C-terminus: Protein MAL2 (176 aa).

Residues Met-1–Thr-34 are Cytoplasmic-facing. The region spanning Ile-31–Arg-175 is the MARVEL domain. Residues Tyr-35–Ala-55 traverse the membrane as a helical segment. The Lumenal segment spans residues Ser-56–Gly-66. A helical membrane pass occupies residues Trp-67–Leu-87. Residues Ser-88 to Asp-102 lie on the Cytoplasmic side of the membrane. A helical transmembrane segment spans residues Phe-103 to Ala-123. Topologically, residues Thr-124–Asn-149 are lumenal. Asn-132 carries N-linked (GlcNAc...) asparagine glycosylation. A helical transmembrane segment spans residues Val-150 to Ala-170. Residues Leu-171 to Pro-176 are Cytoplasmic-facing.

Belongs to the MAL family. As to quaternary structure, interacts with TPD52L2. In terms of tissue distribution, predominantly expressed in kidney, lung, and liver. Also found in thyroid gland, stomach and, at lower levels in testis and small intestine.

The protein resides in the cell membrane. Its subcellular location is the apical cell membrane. It is found in the endomembrane system. The protein localises to the cytoplasm. It localises to the perinuclear region. In terms of biological role, member of the machinery of polarized transport. Required for the indirect transcytotic route at the step of the egress of the transcytosing cargo from perinuclear endosomes in order for it to travel to the apical surface via a raft-dependent pathway. This Homo sapiens (Human) protein is Protein MAL2 (MAL2).